We begin with the raw amino-acid sequence, 380 residues long: SAM and SH3 domain-containing protein 3 (380 aa).

Positions 1-174 are disordered; that stretch reads MLRRKPSNAS…STAPQYTGPF (174 aa). Over residues 22–41 the composition is skewed to low complexity; the sequence is LQRSSSFKDFAKSKPSSPVV. A phosphoserine mark is found at serine 27, serine 34, and serine 42. Threonine 61 carries the post-translational modification Phosphothreonine. The span at 84-93 shows a compositional bias: basic residues; that stretch reads MNRKTGKKMV. Position 97 is a phosphoserine (serine 97). The residue at position 103 (threonine 103) is a Phosphothreonine. Phosphoserine is present on serine 110. A Phosphothreonine modification is found at threonine 112. Phosphoserine is present on residues serine 113 and serine 120. Positions 143-158 are enriched in polar residues; sequence RQASTGSELCSPSPGS. Residues 173-234 enclose the SH3 domain; the sequence is PFCGRARVHT…KFIYVDVLPE (62 aa). The region spanning 252 to 316 is the SAM domain; it reads PKPKTLHELL…LTAAELLLDY (65 aa). A Phosphothreonine modification is found at threonine 318. The span at 318–327 shows a compositional bias: acidic residues; the sequence is TGSEEAEEGT. A disordered region spans residues 318 to 380; that stretch reads TGSEEAEEGT…LHGLSLSGAP (63 aa). The residue at position 320 (serine 320) is a Phosphoserine.

It belongs to the SASH family.

In terms of biological role, may function as a signaling adapter protein in lymphocytes. This Bos taurus (Bovine) protein is SAM and SH3 domain-containing protein 3.